The sequence spans 388 residues: MAFQLTPLRVALVAGEPSGDLLGASLLGGLHARLPASSRYYGIGGPRMSAVEFDAHWPMEKLAVRGYVEALKHIPEILRIRGELKRQLLAEPPDAFVGIDAPDFNFGLEPALRGAGIPTIHFVCPSIWAWRGGRIKKIVKAVDHMLCLFPFEPELLEKAGVAATFVGHPLADEIPLEPDTHGARIALGLPGGGPVIAVLPGSRRSEIELIGPTFFDAMELMQQREPGVRFVVPAATPALRALLQPLVDAHPSLSVTLTEGRAQVAMTAADAILVKSGTVTLEAALLKKPMVISYKVPWLTGQIMRRQGYLPYVGLPNILAGRFVVPELLQHFATPDALADATLTQLRDDANRRALTDIFTDMHLALRQNTAQRAAEAVARVIDSRKPR.

This sequence belongs to the LpxB family.

The catalysed reaction is a lipid X + a UDP-2-N,3-O-bis[(3R)-3-hydroxyacyl]-alpha-D-glucosamine = a lipid A disaccharide + UDP + H(+). Its pathway is bacterial outer membrane biogenesis; LPS lipid A biosynthesis. Condensation of UDP-2,3-diacylglucosamine and 2,3-diacylglucosamine-1-phosphate to form lipid A disaccharide, a precursor of lipid A, a phosphorylated glycolipid that anchors the lipopolysaccharide to the outer membrane of the cell. The polypeptide is Lipid-A-disaccharide synthase (Burkholderia pseudomallei (strain 1710b)).